A 243-amino-acid polypeptide reads, in one-letter code: rRNA adenine N-6-methyltransferase (243 aa).

Asn11, Ile13, Gly38, Glu59, Asp84, and Asn101 together coordinate S-adenosyl-L-methionine.

Belongs to the class I-like SAM-binding methyltransferase superfamily. rRNA adenine N(6)-methyltransferase family.

It catalyses the reaction adenosine(2085) in 23S rRNA + 2 S-adenosyl-L-methionine = N(6)-dimethyladenosine(2085) in 23S rRNA + 2 S-adenosyl-L-homocysteine + 2 H(+). This protein produces a dimethylation of the adenine residue at position 2085 in 23S rRNA, resulting in reduced affinity between ribosomes and macrolide-lincosamide-streptogramin B antibiotics. This is rRNA adenine N-6-methyltransferase (ermA1) from Staphylococcus aureus (strain Mu50 / ATCC 700699).